Consider the following 386-residue polypeptide: MMRNSRPGRAWRGAVVLTGLLALSGCSMFSSDDDRYKPAELTQYAPGMSVRTAWTASVGSGSGLGFAPTVLGESIYAATPDGSVGKFDLLSGRAIWKSSADAKLSAGAGSDGQTTAVATPDGEVIAFDDTGKIKWRARATSDVAIPPVVGYGVVVVRSGDYRIQAFNAENGERMWSMQRPGPALALRSAAQMVLAEGLVISGLPGGKLLAINSATGNVQWEGTVATPRGASDLERLTDVVGAPRIAGRLMCAVAYQGRIVCFDVSAGGRPIWAKDFSSASGMVIDDRFAYAPDQGSVVSAFALDSGNNVWKQAELKNRLLTAPALLGEAVAVGDFEGYVHFLSRSDGRLLARLSVGGGAIVSPPQTTSQGVLVQTGNGSLVMVRAN.

An N-terminal signal peptide occupies residues 1-25 (MMRNSRPGRAWRGAVVLTGLLALSG). A lipid anchor (N-palmitoyl cysteine) is attached at Cys26. Cys26 carries S-diacylglycerol cysteine lipidation.

This sequence belongs to the BamB family. As to quaternary structure, part of the Bam complex.

It localises to the cell outer membrane. In terms of biological role, part of the outer membrane protein assembly complex, which is involved in assembly and insertion of beta-barrel proteins into the outer membrane. The protein is Outer membrane protein assembly factor BamB of Bordetella pertussis (strain Tohama I / ATCC BAA-589 / NCTC 13251).